We begin with the raw amino-acid sequence, 572 residues long: Proline--tRNA ligase (572 aa).

Belongs to the class-II aminoacyl-tRNA synthetase family. ProS type 1 subfamily. Homodimer.

It is found in the cytoplasm. The catalysed reaction is tRNA(Pro) + L-proline + ATP = L-prolyl-tRNA(Pro) + AMP + diphosphate. In terms of biological role, catalyzes the attachment of proline to tRNA(Pro) in a two-step reaction: proline is first activated by ATP to form Pro-AMP and then transferred to the acceptor end of tRNA(Pro). As ProRS can inadvertently accommodate and process non-cognate amino acids such as alanine and cysteine, to avoid such errors it has two additional distinct editing activities against alanine. One activity is designated as 'pretransfer' editing and involves the tRNA(Pro)-independent hydrolysis of activated Ala-AMP. The other activity is designated 'posttransfer' editing and involves deacylation of mischarged Ala-tRNA(Pro). The misacylated Cys-tRNA(Pro) is not edited by ProRS. This chain is Proline--tRNA ligase, found in Pectobacterium atrosepticum (strain SCRI 1043 / ATCC BAA-672) (Erwinia carotovora subsp. atroseptica).